We begin with the raw amino-acid sequence, 342 residues long: Phosphatidate cytidylyltransferase, mitochondrial (342 aa).

The protein belongs to the TAM41 family. The cofactor is Mg(2+). Requires Co(2+) as cofactor. It depends on Cu(2+) as a cofactor.

It localises to the mitochondrion inner membrane. The enzyme catalyses a 1,2-diacyl-sn-glycero-3-phosphate + CTP + H(+) = a CDP-1,2-diacyl-sn-glycerol + diphosphate. Its pathway is phospholipid metabolism; CDP-diacylglycerol biosynthesis; CDP-diacylglycerol from sn-glycerol 3-phosphate: step 3/3. Functionally, catalyzes the formation of CDP-diacylglycerol (CDP-DAG) from phosphatidic acid (PA) in the mitochondrial inner membrane. Required for the biosynthesis of the dimeric phospholipid cardiolipin, which stabilizes supercomplexes of the mitochondrial respiratory chain in the mitochondrial inner membrane. The polypeptide is Phosphatidate cytidylyltransferase, mitochondrial (Drosophila melanogaster (Fruit fly)).